A 296-amino-acid chain; its full sequence is Glycerol-3-phosphate dehydrogenase [NAD(P)+] (296 aa).

NADPH-binding residues include tryptophan 12, arginine 31, and lysine 80. Lysine 80, glycine 108, and serine 110 together coordinate sn-glycerol 3-phosphate. Alanine 112 lines the NADPH pocket. Residues lysine 162, aspartate 215, serine 225, arginine 226, and asparagine 227 each contribute to the sn-glycerol 3-phosphate site. The active-site Proton acceptor is the lysine 162. Position 226 (arginine 226) interacts with NADPH. Residues valine 250 and glutamate 252 each coordinate NADPH.

This sequence belongs to the NAD-dependent glycerol-3-phosphate dehydrogenase family.

The protein resides in the cytoplasm. The catalysed reaction is sn-glycerol 3-phosphate + NAD(+) = dihydroxyacetone phosphate + NADH + H(+). The enzyme catalyses sn-glycerol 3-phosphate + NADP(+) = dihydroxyacetone phosphate + NADPH + H(+). It participates in membrane lipid metabolism; glycerophospholipid metabolism. In terms of biological role, catalyzes the reduction of the glycolytic intermediate dihydroxyacetone phosphate (DHAP) to sn-glycerol 3-phosphate (G3P), the key precursor for phospholipid synthesis. This Sulfurimonas denitrificans (strain ATCC 33889 / DSM 1251) (Thiomicrospira denitrificans (strain ATCC 33889 / DSM 1251)) protein is Glycerol-3-phosphate dehydrogenase [NAD(P)+].